The sequence spans 315 residues: Ribosomal protein L11 methyltransferase (315 aa).

4 residues coordinate S-adenosyl-L-methionine: threonine 152, glycine 185, aspartate 207, and asparagine 249.

This sequence belongs to the methyltransferase superfamily. PrmA family.

The protein localises to the cytoplasm. It catalyses the reaction L-lysyl-[protein] + 3 S-adenosyl-L-methionine = N(6),N(6),N(6)-trimethyl-L-lysyl-[protein] + 3 S-adenosyl-L-homocysteine + 3 H(+). Functionally, methylates ribosomal protein L11. The protein is Ribosomal protein L11 methyltransferase of Geotalea uraniireducens (strain Rf4) (Geobacter uraniireducens).